A 119-amino-acid polypeptide reads, in one-letter code: Large ribosomal subunit protein bL19 (119 aa).

It belongs to the bacterial ribosomal protein bL19 family.

Functionally, this protein is located at the 30S-50S ribosomal subunit interface and may play a role in the structure and function of the aminoacyl-tRNA binding site. In Leuconostoc citreum (strain KM20), this protein is Large ribosomal subunit protein bL19.